Here is a 291-residue protein sequence, read N- to C-terminus: Glycine--tRNA ligase alpha subunit (291 aa).

Belongs to the class-II aminoacyl-tRNA synthetase family. In terms of assembly, tetramer of two alpha and two beta subunits.

The protein localises to the cytoplasm. The enzyme catalyses tRNA(Gly) + glycine + ATP = glycyl-tRNA(Gly) + AMP + diphosphate. In Geobacter metallireducens (strain ATCC 53774 / DSM 7210 / GS-15), this protein is Glycine--tRNA ligase alpha subunit.